Here is a 396-residue protein sequence, read N- to C-terminus: S-adenosylmethionine decarboxylase proenzyme (396 aa).

Residues E29 and E32 contribute to the active site. The active-site Schiff-base intermediate with substrate; via pyruvic acid is the S88. S88 carries the pyruvic acid (Ser); by autocatalysis modification. The Proton donor; for catalytic activity role is filled by C102. Catalysis depends on proton acceptor; for processing activity residues S287 and H301.

Belongs to the eukaryotic AdoMetDC family. Requires pyruvate as cofactor. In terms of processing, is synthesized initially as an inactive proenzyme. Formation of the active enzyme involves a self-maturation process in which the active site pyruvoyl group is generated from an internal serine residue via an autocatalytic post-translational modification. Two non-identical subunits are generated from the proenzyme in this reaction, and the pyruvate is formed at the N-terminus of the alpha chain, which is derived from the carboxyl end of the proenzyme. The post-translation cleavage follows an unusual pathway, termed non-hydrolytic serinolysis, in which the side chain hydroxyl group of the serine supplies its oxygen atom to form the C-terminus of the beta chain, while the remainder of the serine residue undergoes an oxidative deamination to produce ammonia and the pyruvoyl group blocking the N-terminus of the alpha chain.

The enzyme catalyses S-adenosyl-L-methionine + H(+) = S-adenosyl 3-(methylsulfanyl)propylamine + CO2. Its pathway is amine and polyamine biosynthesis; S-adenosylmethioninamine biosynthesis; S-adenosylmethioninamine from S-adenosyl-L-methionine: step 1/1. Its function is as follows. Catalyzes the decarboxylation of S-adenosylmethionine, a key step in the biosynthetic pathway for spermidine and spermine. It is essential for normal growth, sporulation, and maintenance of ds-RNA virus. The chain is S-adenosylmethionine decarboxylase proenzyme (SPE2) from Saccharomyces cerevisiae (strain ATCC 204508 / S288c) (Baker's yeast).